Consider the following 79-residue polypeptide: uncharacterized protein (79 aa).

This is an uncharacterized protein from Helicobacter pylori (strain ATCC 700392 / 26695) (Campylobacter pylori).